The following is a 440-amino-acid chain: Alpha-methylserine aldolase (440 aa).

Lys255 bears the N6-(pyridoxal phosphate)lysine mark.

Belongs to the SHMT family. Alpha-methylserine aldolase subfamily. In terms of assembly, homodimer. Pyridoxal 5'-phosphate is required as a cofactor.

The enzyme catalyses 2-methyl-L-serine = formaldehyde + L-alanine. In terms of biological role, catalyzes the reversible interconversion of alpha-methyl-L-serine to L-alanine and formaldehyde. The polypeptide is Alpha-methylserine aldolase (Variovorax paradoxus).